The following is a 150-amino-acid chain: MPELFAYTDGACSGNPGPGGWGVLLQAKEGDRLVKERALKGGEAHTTNNRMELLAAINALESLSRASTITVVTDSNYVKNGITGWIHGWKRNGWKNAAKKPVANAELWQRLDEANARHDVTWKWVKGHAGHAENERADELARAGMAPFKP.

Residues 1-146 (MPELFAYTDG…ADELARAGMA (146 aa)) enclose the RNase H type-1 domain. Asp-9, Glu-52, Asp-74, and Asp-138 together coordinate Mg(2+).

This sequence belongs to the RNase H family. In terms of assembly, monomer. It depends on Mg(2+) as a cofactor.

The protein localises to the cytoplasm. It carries out the reaction Endonucleolytic cleavage to 5'-phosphomonoester.. Its function is as follows. Endonuclease that specifically degrades the RNA of RNA-DNA hybrids. This is Ribonuclease H from Roseobacter denitrificans (strain ATCC 33942 / OCh 114) (Erythrobacter sp. (strain OCh 114)).